The chain runs to 690 residues: Eukaryotic translation initiation factor 3 subunit B (690 aa).

Residues methionine 1–aspartate 37 form a disordered region. The span at asparagine 15 to phenylalanine 25 shows a compositional bias: acidic residues. In terms of domain architecture, RRM spans serine 57–aspartate 141. WD repeat units lie at residues threonine 207–lysine 246, aspartate 293–leucine 331, isoleucine 334–glutamate 369, glutamate 442–leucine 484, and proline 530–threonine 575. Positions glutamate 595–arginine 645 form a coiled coil.

This sequence belongs to the eIF-3 subunit B family. In terms of assembly, component of the eukaryotic translation initiation factor 3 (eIF-3) complex. The eIF-3 complex interacts with pix. Interacts with mxt.

The protein resides in the cytoplasm. In terms of biological role, RNA-binding component of the eukaryotic translation initiation factor 3 (eIF-3) complex, which is involved in protein synthesis of a specialized repertoire of mRNAs and, together with other initiation factors, stimulates binding of mRNA and methionyl-tRNAi to the 40S ribosome. The eIF-3 complex specifically targets and initiates translation of a subset of mRNAs involved in cell proliferation. This chain is Eukaryotic translation initiation factor 3 subunit B, found in Drosophila sechellia (Fruit fly).